Consider the following 105-residue polypeptide: MICOS complex subunit Mic10 (105 aa).

Residues 29–46 (LLKVTGGVAIGIVASVAF) form a helical membrane-spanning segment. The Mitochondrial intermembrane portion of the chain corresponds to 47–105 (FKSRSWPIWFGSGVGLGTGWSNCRHDFASPYVLHGKRVPAGQDSQGKPAYNIITEQHKQ). The tract at residues 85-105 (PAGQDSQGKPAYNIITEQHKQ) is disordered.

This sequence belongs to the MICOS complex subunit Mic10 family. As to quaternary structure, component of the mitochondrial contact site and cristae organizing system (MICOS) complex.

Its subcellular location is the mitochondrion inner membrane. Component of the MICOS complex, a large protein complex of the mitochondrial inner membrane that plays crucial roles in the maintenance of crista junctions, inner membrane architecture, and formation of contact sites to the outer membrane. The chain is MICOS complex subunit Mic10 from Caenorhabditis elegans.